A 270-amino-acid chain; its full sequence is tRNA 2-(methylsulfanyl)-N(6)-isopentenyladenosine(37) hydroxylase (270 aa).

Fe cation-binding residues include glutamate 59, glutamate 137, histidine 140, glutamate 190, glutamate 219, and histidine 222.

Belongs to the MiaE family. Monomer. Fe cation is required as a cofactor.

It carries out the reaction 2-methylsulfanyl-N(6)-dimethylallyladenosine(37) in tRNA + AH2 + O2 = N(6)-[(2E)-4-hydroxy-3-methylbut-2-en-1-yl]-2-(methylsulfanyl)adenosine(37) in tRNA + A + H2O. It participates in tRNA modification; 2-methylthio-N-6-(cis-hydroxy)isopentenyl adenosine-tRNA biosynthesis. Involved in specific tRNA modification. Catalyzes the oxygen-dependent hydroxylation of 2-methylthio-N-6-isopentenyl adenosine (ms2i6A) to produce 2-methylthio-N-6-(cis-hydroxy)isopentenyl adenosine (ms2io6A) at position 37 in tRNAs. Can also use N6-(dimethylallyl)adenosine (i6A) as substrate, with lower efficiency. The presence of the hydroxyl group on the tRNA may regulate the ability of S.typhimurium to grow on the citric acid cycle (CAC) intermediates succinate, fumarate and malate. In Salmonella typhimurium (strain LT2 / SGSC1412 / ATCC 700720), this protein is tRNA 2-(methylsulfanyl)-N(6)-isopentenyladenosine(37) hydroxylase.